Reading from the N-terminus, the 701-residue chain is Elongation factor G (701 aa).

The region spanning 10 to 286 (NKVRNIGIMA…AVIDYLPSPL (277 aa)) is the tr-type G domain. Residues 19–26 (AHIDAGKT), 83–87 (DTPGH), and 137–140 (NKMD) each bind GTP.

The protein belongs to the TRAFAC class translation factor GTPase superfamily. Classic translation factor GTPase family. EF-G/EF-2 subfamily.

It is found in the cytoplasm. Catalyzes the GTP-dependent ribosomal translocation step during translation elongation. During this step, the ribosome changes from the pre-translocational (PRE) to the post-translocational (POST) state as the newly formed A-site-bound peptidyl-tRNA and P-site-bound deacylated tRNA move to the P and E sites, respectively. Catalyzes the coordinated movement of the two tRNA molecules, the mRNA and conformational changes in the ribosome. The polypeptide is Elongation factor G (Mycobacteroides abscessus (strain ATCC 19977 / DSM 44196 / CCUG 20993 / CIP 104536 / JCM 13569 / NCTC 13031 / TMC 1543 / L948) (Mycobacterium abscessus)).